The following is a 413-amino-acid chain: NAD(P)H oxidoreductase RTN4IP1, mitochondrial (413 aa).

Residues 1-23 constitute a mitochondrion transit peptide; it reads MTAAGFNSILCLRQLVRLNRRQY. Positions 27–52 are disordered; it reads AKSVLSGSQTNDQATPPPTSKSADKM. Polar residues predominate over residues 31-40; the sequence is LSGSQTNDQA. One can recognise an Enoyl reductase (ER) domain in the interval 61 to 405; sequence GDIDELQLSE…SGHLRGKIVV (345 aa). Residues S228, G230, V231, S251, Y269, G353, F355, H398, and R400 each coordinate NADPH.

Belongs to the zinc-containing alcohol dehydrogenase family. Quinone oxidoreductase subfamily.

The protein localises to the mitochondrion matrix. The catalysed reaction is a quinone + NADH + H(+) = a quinol + NAD(+). It catalyses the reaction a quinone + NADPH + H(+) = a quinol + NADP(+). It functions in the pathway cofactor biosynthesis; ubiquinone biosynthesis. Its function is as follows. NAD(P)H oxidoreductase. Involved in the ubiquinone biosynthetic pathway. The sequence is that of NAD(P)H oxidoreductase RTN4IP1, mitochondrial from Drosophila melanogaster (Fruit fly).